Here is a 152-residue protein sequence, read N- to C-terminus: Flagellar assembly factor FliW (152 aa).

It belongs to the FliW family. As to quaternary structure, interacts with translational regulator CsrA and flagellin(s).

The protein localises to the cytoplasm. Functionally, acts as an anti-CsrA protein, binds CsrA and prevents it from repressing translation of its target genes, one of which is flagellin. Binds to flagellin and participates in the assembly of the flagellum. The chain is Flagellar assembly factor FliW from Caldicellulosiruptor bescii (strain ATCC BAA-1888 / DSM 6725 / KCTC 15123 / Z-1320) (Anaerocellum thermophilum).